A 107-amino-acid polypeptide reads, in one-letter code: Phosphoribosyl-ATP pyrophosphatase (107 aa).

It belongs to the PRA-PH family.

The protein localises to the cytoplasm. The catalysed reaction is 1-(5-phospho-beta-D-ribosyl)-ATP + H2O = 1-(5-phospho-beta-D-ribosyl)-5'-AMP + diphosphate + H(+). It participates in amino-acid biosynthesis; L-histidine biosynthesis; L-histidine from 5-phospho-alpha-D-ribose 1-diphosphate: step 2/9. The polypeptide is Phosphoribosyl-ATP pyrophosphatase (Brucella abortus (strain S19)).